A 118-amino-acid chain; its full sequence is Large ribosomal subunit protein bL20 (118 aa).

This sequence belongs to the bacterial ribosomal protein bL20 family.

Functionally, binds directly to 23S ribosomal RNA and is necessary for the in vitro assembly process of the 50S ribosomal subunit. It is not involved in the protein synthesizing functions of that subunit. This is Large ribosomal subunit protein bL20 from Francisella tularensis subsp. novicida (strain U112).